A 169-amino-acid chain; its full sequence is S-ribosylhomocysteine lyase (169 aa).

Residues His-54, His-58, and Cys-128 each coordinate Fe cation.

This sequence belongs to the LuxS family. Homodimer. Fe cation serves as cofactor.

It carries out the reaction S-(5-deoxy-D-ribos-5-yl)-L-homocysteine = (S)-4,5-dihydroxypentane-2,3-dione + L-homocysteine. Involved in the synthesis of autoinducer 2 (AI-2) which is secreted by bacteria and is used to communicate both the cell density and the metabolic potential of the environment. The regulation of gene expression in response to changes in cell density is called quorum sensing. Catalyzes the transformation of S-ribosylhomocysteine (RHC) to homocysteine (HC) and 4,5-dihydroxy-2,3-pentadione (DPD). This chain is S-ribosylhomocysteine lyase, found in Tolumonas auensis (strain DSM 9187 / NBRC 110442 / TA 4).